Here is a 223-residue protein sequence, read N- to C-terminus: Sporulation-specific protein 19 (223 aa).

Positions 1 to 20 are cleaved as a signal peptide; that stretch reads MKKQILIVAAQSILCSTVFG. Asn198 is lipidated: GPI-anchor amidated asparagine. Positions 199-223 are cleaved as a propeptide — removed in mature form; the sequence is ASNFLTPTTVALAVLLTILLFIQAY.

In terms of processing, the GPI-anchor is attached to the protein in the endoplasmic reticulum and serves to target the protein to the cell surface. There, the glucosamine-inositol phospholipid moiety is cleaved off and the GPI-modified mannoprotein is covalently attached via its lipidless GPI glycan remnant to the 1,6-beta-glucan of the outer cell wall layer.

Its subcellular location is the secreted. The protein localises to the cell wall. It localises to the membrane. Its function is as follows. Involved in sporulation. Essential for completion of the nuclear division. This Saccharomyces cerevisiae (strain ATCC 204508 / S288c) (Baker's yeast) protein is Sporulation-specific protein 19 (SPO19).